The sequence spans 348 residues: Rhodopsin (348 aa).

Residue methionine 1 is modified to N-acetylmethionine. Residues 1–36 lie on the Extracellular side of the membrane; that stretch reads MNGTEGPNFYVPFSNATGVVRSPFEYPQYYLAEPWQ. Asparagine 2 and asparagine 15 each carry an N-linked (GlcNAc...) asparagine glycan. The helical transmembrane segment at 37–61 threads the bilayer; that stretch reads FSMLAAYMFMLIVLGFPINFLTLYV. The Cytoplasmic portion of the chain corresponds to 62 to 73; sequence TVQHKKLRTPLN. Residues 74-96 form a helical membrane-spanning segment; the sequence is YILLNLAVADLFMVFGGFTTTLY. Over 97-110 the chain is Extracellular; sequence TSLHGYFVFGPTGC. Residues cysteine 110 and cysteine 187 are joined by a disulfide bond. The chain crosses the membrane as a helical span at residues 111–133; the sequence is NLEGFFATLGGEIALWSLVVLAI. Positions 134 to 136 match the 'Ionic lock' involved in activated form stabilization motif; that stretch reads ERY. Residues 134–152 are Cytoplasmic-facing; it reads ERYVVVCKPMSNFRFGENH. Residues 153–173 traverse the membrane as a helical segment; sequence AIMGLVFTWIMALACAAPPLV. Residues 174–202 lie on the Extracellular side of the membrane; it reads GWSRYIPEGMQCSCGIDYYTLKPEVNNES. Zn(2+) is bound at residue glutamate 201. The helical transmembrane segment at 203–224 threads the bilayer; sequence FVIYMFVVHFFIPLFVIFFCYG. The Cytoplasmic portion of the chain corresponds to 225–252; sequence QLVFTVKEAAAQQQESATTQKAEKEVTR. A helical membrane pass occupies residues 253-274; that stretch reads MVIIMVIAFLICWLPYAGVAFY. Over 275-286 the chain is Extracellular; sequence IFTHQGSNFGPI. Glutamine 279 contributes to the Zn(2+) binding site. The chain crosses the membrane as a helical span at residues 287 to 308; sequence FMTLPAFFAKTASIYNPVIYIM. N6-(retinylidene)lysine is present on lysine 296. Residues 309-348 are Cytoplasmic-facing; it reads MNKQFRTCMITTLCCGKNPLGDDEASTTASKTETSQVAPA. S-palmitoyl cysteine attachment occurs at residues cysteine 322 and cysteine 323. The tract at residues 330–348 is interaction with SAG; the sequence is DDEASTTASKTETSQVAPA. A Phosphoserine modification is found at serine 334. A phosphothreonine mark is found at threonine 335 and threonine 336. Serine 338 is subject to Phosphoserine. Phosphothreonine occurs at positions 340 and 342. Position 343 is a phosphoserine (serine 343).

Belongs to the G-protein coupled receptor 1 family. Opsin subfamily. As to quaternary structure, homodimer. May form a complex composed of RHO, GRK1 and RCVRN in a Ca(2+)-dependent manner; RCVRN prevents the interaction between GRK1 and RHO. Interacts with GRK1. Interacts (phosphorylated form) with SAG. Interacts with GNAT1. Interacts with GNAT3. SAG and G-proteins compete for a common binding site. Interacts with PRCD; the interaction promotes PRCD stability. Forms a complex with ASAP1 and ARF4. Forms a complex with ASAP1, RAB11A, Rabin8/RAB3IP, ARF4 and RAB11FIP3; the complex regulates Golgi-to-cilia rhodopsin/RHO transport in photoreceptors. In terms of processing, phosphorylated on some or all of the serine and threonine residues present in the C-terminal region. Contains one covalently linked retinal chromophore. Upon light absorption, the covalently bound 11-cis-retinal is converted to all-trans-retinal. After hydrolysis of the Schiff base and release of the covalently bound all-trans-retinal, active rhodopsin is regenerated by binding of a fresh molecule of 11-cis-retinal.

The protein localises to the membrane. The protein resides in the cell projection. It localises to the cilium. Its subcellular location is the photoreceptor outer segment. Functionally, photoreceptor required for image-forming vision at low light intensity. Required for photoreceptor cell viability after birth. Light-induced isomerization of 11-cis to all-trans retinal triggers a conformational change that activates signaling via G-proteins. Subsequent receptor phosphorylation mediates displacement of the bound G-protein alpha subunit by the arrestin SAG and terminates signaling. This chain is Rhodopsin (RHO), found in Otolemur crassicaudatus (Brown greater galago).